The primary structure comprises 234 residues: Adenosine 5'-phosphosulfate reductase (234 aa).

The [4Fe-4S] cluster site is built by C120, C121, C203, and C206. C229 (nucleophile; cysteine thiosulfonate intermediate) is an active-site residue.

This sequence belongs to the PAPS reductase family. CysH subfamily. [4Fe-4S] cluster serves as cofactor.

The protein resides in the cytoplasm. It carries out the reaction [thioredoxin]-disulfide + sulfite + AMP + 2 H(+) = adenosine 5'-phosphosulfate + [thioredoxin]-dithiol. It participates in sulfur metabolism; hydrogen sulfide biosynthesis; sulfite from sulfate. In terms of biological role, catalyzes the formation of sulfite from adenosine 5'-phosphosulfate (APS) using thioredoxin as an electron donor. This Bacillus cereus (strain ATCC 14579 / DSM 31 / CCUG 7414 / JCM 2152 / NBRC 15305 / NCIMB 9373 / NCTC 2599 / NRRL B-3711) protein is Adenosine 5'-phosphosulfate reductase.